A 352-amino-acid chain; its full sequence is DNA polymerase IV (352 aa).

In terms of domain architecture, UmuC spans 6-186; it reads IIHIDMDAFY…LPLGKIPGVG (181 aa). The Mg(2+) site is built by Asp10 and Asp104. Glu105 is a catalytic residue.

This sequence belongs to the DNA polymerase type-Y family. Monomer. The cofactor is Mg(2+).

Its subcellular location is the cytoplasm. It catalyses the reaction DNA(n) + a 2'-deoxyribonucleoside 5'-triphosphate = DNA(n+1) + diphosphate. Poorly processive, error-prone DNA polymerase involved in untargeted mutagenesis. Copies undamaged DNA at stalled replication forks, which arise in vivo from mismatched or misaligned primer ends. These misaligned primers can be extended by PolIV. Exhibits no 3'-5' exonuclease (proofreading) activity. May be involved in translesional synthesis, in conjunction with the beta clamp from PolIII. The sequence is that of DNA polymerase IV from Neisseria meningitidis serogroup A / serotype 4A (strain DSM 15465 / Z2491).